The primary structure comprises 313 residues: DNA-directed RNA polymerase subunit alpha (313 aa).

The interval 1–227 (MMLDVAPPRF…DFFGLFAEGY (227 aa)) is alpha N-terminal domain (alpha-NTD). Residues 242–313 (RPVITDERPI…YGYTLESGRE (72 aa)) are alpha C-terminal domain (alpha-CTD).

This sequence belongs to the RNA polymerase alpha chain family. Homodimer. The RNAP catalytic core consists of 2 alpha, 1 beta, 1 beta' and 1 omega subunit. When a sigma factor is associated with the core the holoenzyme is formed, which can initiate transcription.

It catalyses the reaction RNA(n) + a ribonucleoside 5'-triphosphate = RNA(n+1) + diphosphate. In terms of biological role, DNA-dependent RNA polymerase catalyzes the transcription of DNA into RNA using the four ribonucleoside triphosphates as substrates. The polypeptide is DNA-directed RNA polymerase subunit alpha (Rubrobacter xylanophilus (strain DSM 9941 / JCM 11954 / NBRC 16129 / PRD-1)).